A 390-amino-acid chain; its full sequence is Cyclic amide hydrolase (390 aa).

The interval 1–118 (MPNPEASLSP…TVVTQEWVAD (118 aa)) is RU A. Residues R66 and 97–98 (SG) contribute to the substrate site. Positions 127–268 (GLVVGRGHTE…GEVLLLANSA (142 aa)) are RU B. K177 is an active-site residue. Residues N213, 251-252 (SS), K346, and 365-366 (SG) each bind substrate. S251 functions as the Nucleophile in the catalytic mechanism. Residues 274 to 390 (LRIGHGITRD…VAAVVRRLPA (117 aa)) are RU C.

The protein belongs to the cyclic amide hydrolase (CyAH) family. Homotetramer; disulfide-linked. The disulfide forms between 2 monomers in the tetramer, such that each tetramer contains 2 sets of vicinal disulfides.

In terms of biological role, cyclic amide hydrolase of unknown substrate specificity. Catalyzes the hydrolytic ring-opening of a cyclic amide. Does not act on cyanuric acid nor barbituric acid. The sequence is that of Cyclic amide hydrolase from Pseudofrankia inefficax (strain DSM 45817 / CECT 9037 / DDB 130130 / EuI1c) (Frankia inefficax).